The following is a 316-amino-acid chain: Ribose-phosphate pyrophosphokinase (316 aa).

Residues 41–43 and 100–101 each bind ATP; these read DGE and RQ. His134 and Asp174 together coordinate Mg(2+). Residue Lys197 is part of the active site. D-ribose 5-phosphate contacts are provided by residues Arg199, Asp223, and 227 to 231; that span reads DTAGT.

This sequence belongs to the ribose-phosphate pyrophosphokinase family. Class I subfamily. In terms of assembly, homohexamer. The cofactor is Mg(2+).

It localises to the cytoplasm. The enzyme catalyses D-ribose 5-phosphate + ATP = 5-phospho-alpha-D-ribose 1-diphosphate + AMP + H(+). It functions in the pathway metabolic intermediate biosynthesis; 5-phospho-alpha-D-ribose 1-diphosphate biosynthesis; 5-phospho-alpha-D-ribose 1-diphosphate from D-ribose 5-phosphate (route I): step 1/1. Its function is as follows. Involved in the biosynthesis of the central metabolite phospho-alpha-D-ribosyl-1-pyrophosphate (PRPP) via the transfer of pyrophosphoryl group from ATP to 1-hydroxyl of ribose-5-phosphate (Rib-5-P). The protein is Ribose-phosphate pyrophosphokinase of Caldanaerobacter subterraneus subsp. tengcongensis (strain DSM 15242 / JCM 11007 / NBRC 100824 / MB4) (Thermoanaerobacter tengcongensis).